Consider the following 161-residue polypeptide: MPSFDIVSEVDEVELRNAVENSRRELSGRFDFRGKDASIDYKDHVVTLTAEDDFQCKQLVDILRTQLSKRNVEPSTMDVDEKSVHSGKTFSLKVRFKQGIETDIAKKIVKMVKDSKIKVQSQIQGDTVRVTGKARDDLQAVMALVRQADLGQPFQFNNFRD.

Belongs to the YajQ family.

Functionally, nucleotide-binding protein. This Shewanella oneidensis (strain ATCC 700550 / JCM 31522 / CIP 106686 / LMG 19005 / NCIMB 14063 / MR-1) protein is Nucleotide-binding protein SO_3815.